The chain runs to 208 residues: Probable transcriptional regulator ycf29 (208 aa).

Residues 11–118 (KLILIEPEEH…ELIAIISNLI (108 aa)) enclose the Response regulatory domain. Position 60 is a 4-aspartylphosphate (Asp-60). The HTH luxR-type domain maps to 146–208 (TSFSYINLTV…NRIQILSYFN (63 aa)).

The protein resides in the plastid. It is found in the chloroplast. The chain is Probable transcriptional regulator ycf29 (ycf29) from Guillardia theta (Cryptophyte).